The chain runs to 333 residues: Adenosine deaminase (333 aa).

Residues His-12 and His-14 each coordinate Zn(2+). His-14, Asp-16, and Gly-170 together coordinate substrate. His-197 is a Zn(2+) binding site. Glu-200 functions as the Proton donor in the catalytic mechanism. Asp-278 lines the Zn(2+) pocket. Asp-279 lines the substrate pocket.

The protein belongs to the metallo-dependent hydrolases superfamily. Adenosine and AMP deaminases family. Adenosine deaminase subfamily. Zn(2+) serves as cofactor.

The enzyme catalyses adenosine + H2O + H(+) = inosine + NH4(+). It catalyses the reaction 2'-deoxyadenosine + H2O + H(+) = 2'-deoxyinosine + NH4(+). Catalyzes the hydrolytic deamination of adenosine and 2-deoxyadenosine. In Escherichia coli O7:K1 (strain IAI39 / ExPEC), this protein is Adenosine deaminase.